Consider the following 201-residue polypeptide: 3-isopropylmalate dehydratase small subunit (201 aa).

It belongs to the LeuD family. LeuD type 1 subfamily. Heterodimer of LeuC and LeuD.

The enzyme catalyses (2R,3S)-3-isopropylmalate = (2S)-2-isopropylmalate. Its pathway is amino-acid biosynthesis; L-leucine biosynthesis; L-leucine from 3-methyl-2-oxobutanoate: step 2/4. In terms of biological role, catalyzes the isomerization between 2-isopropylmalate and 3-isopropylmalate, via the formation of 2-isopropylmaleate. The chain is 3-isopropylmalate dehydratase small subunit from Buchnera aphidicola subsp. Baizongia pistaciae (strain Bp).